A 514-amino-acid chain; its full sequence is 2-isopropylmalate synthase (514 aa).

Positions 5-268 constitute a Pyruvate carboxyltransferase domain; that stretch reads LIIFDTTLRD…DVGIDTTQIV (264 aa). Residues D14, H202, H204, and N239 each contribute to the Mn(2+) site. The interval 395–514 is regulatory domain; that stretch reads KFVSLSQRSE…KDDKLNPQRA (120 aa).

The protein belongs to the alpha-IPM synthase/homocitrate synthase family. LeuA type 1 subfamily. Homodimer. Mn(2+) is required as a cofactor.

The protein localises to the cytoplasm. The catalysed reaction is 3-methyl-2-oxobutanoate + acetyl-CoA + H2O = (2S)-2-isopropylmalate + CoA + H(+). It participates in amino-acid biosynthesis; L-leucine biosynthesis; L-leucine from 3-methyl-2-oxobutanoate: step 1/4. Its function is as follows. Catalyzes the condensation of the acetyl group of acetyl-CoA with 3-methyl-2-oxobutanoate (2-ketoisovalerate) to form 3-carboxy-3-hydroxy-4-methylpentanoate (2-isopropylmalate). This Burkholderia cenocepacia (strain HI2424) protein is 2-isopropylmalate synthase.